The following is a 327-amino-acid chain: Phenylalanine--tRNA ligase alpha subunit (327 aa).

Residue glutamate 252 coordinates Mg(2+).

The protein belongs to the class-II aminoacyl-tRNA synthetase family. Phe-tRNA synthetase alpha subunit type 1 subfamily. In terms of assembly, tetramer of two alpha and two beta subunits. The cofactor is Mg(2+).

The protein resides in the cytoplasm. The catalysed reaction is tRNA(Phe) + L-phenylalanine + ATP = L-phenylalanyl-tRNA(Phe) + AMP + diphosphate + H(+). This is Phenylalanine--tRNA ligase alpha subunit from Yersinia enterocolitica serotype O:8 / biotype 1B (strain NCTC 13174 / 8081).